The following is a 359-amino-acid chain: Stearoyl-CoA desaturase (359 aa).

Topologically, residues methionine 1 to valine 72 are cytoplasmic. A helical membrane pass occupies residues tryptophan 73–isoleucine 93. Asparagine 75 contacts substrate. At proline 94–lysine 97 the chain is on the lumenal side. A helical membrane pass occupies residues isoleucine 98 to glycine 118. The Cytoplasmic segment spans residues alanine 119 to tyrosine 217. Residues histidine 120 and histidine 125 each coordinate Fe cation. The Histidine box-1 motif lies at histidine 120 to histidine 125. Substrate-binding residues include asparagine 148, arginine 155, and aspartate 156. Fe cation-binding residues include histidine 157, histidine 160, and histidine 161. The Histidine box-2 signature appears at histidine 157 to histidine 161. Residues arginine 188 and lysine 189 each coordinate substrate. Serine 203 carries the phosphoserine modification. A helical transmembrane segment spans residues tyrosine 218–cysteine 237. Over tryptophan 238–alanine 241 the chain is Lumenal. Residues phenylalanine 242–leucine 263 traverse the membrane as a helical segment. Tryptophan 262 is a binding site for substrate. Topologically, residues valine 264–glycine 359 are cytoplasmic. Fe cation contacts are provided by histidine 269, histidine 298, histidine 301, and histidine 302. Residues histidine 298–histidine 302 carry the Histidine box-3 motif.

Belongs to the fatty acid desaturase type 1 family. Fe(2+) is required as a cofactor.

It is found in the endoplasmic reticulum membrane. It catalyses the reaction octadecanoyl-CoA + 2 Fe(II)-[cytochrome b5] + O2 + 2 H(+) = (9Z)-octadecenoyl-CoA + 2 Fe(III)-[cytochrome b5] + 2 H2O. The catalysed reaction is hexadecanoyl-CoA + 2 Fe(II)-[cytochrome b5] + O2 + 2 H(+) = (9Z)-hexadecenoyl-CoA + 2 Fe(III)-[cytochrome b5] + 2 H2O. Its function is as follows. Stearoyl-CoA desaturase that utilizes O(2) and electrons from reduced cytochrome b5 to introduce the first double bond into saturated fatty acyl-CoA substrates. Catalyzes the insertion of a cis double bond at the delta-9 position into fatty acyl-CoA substrates including palmitoyl-CoA and stearoyl-CoA. Gives rise to a mixture of 16:1 and 18:1 unsaturated fatty acids. Plays an important role in lipid biosynthesis. Plays an important role in regulating the expression of genes that are involved in lipogenesis and in regulating mitochondrial fatty acid oxidation. Plays an important role in body energy homeostasis. Contributes to the biosynthesis of membrane phospholipids, cholesterol esters and triglycerides. The chain is Stearoyl-CoA desaturase (SCD) from Sus scrofa (Pig).